We begin with the raw amino-acid sequence, 166 residues long: CDP-archaeol synthase (166 aa).

Transmembrane regions (helical) follow at residues 7–27, 55–75, 78–98, 116–136, and 138–158; these read LLLSILIYLPAFIANGSGPFI, LIVALTFGTTVGVIISKFFTA, TLISFLESLFAMIGDMIGAFI, LDFVLGASLILVLMRVNITWY, and FLFICGLAFFLHQGTNYVAYL.

This sequence belongs to the CDP-archaeol synthase family. Requires Mg(2+) as cofactor.

It localises to the cell membrane. The enzyme catalyses 2,3-bis-O-(geranylgeranyl)-sn-glycerol 1-phosphate + CTP + H(+) = CDP-2,3-bis-O-(geranylgeranyl)-sn-glycerol + diphosphate. It functions in the pathway membrane lipid metabolism; glycerophospholipid metabolism. Catalyzes the formation of CDP-2,3-bis-(O-geranylgeranyl)-sn-glycerol (CDP-archaeol) from 2,3-bis-(O-geranylgeranyl)-sn-glycerol 1-phosphate (DGGGP) and CTP. This reaction is the third ether-bond-formation step in the biosynthesis of archaeal membrane lipids. The chain is CDP-archaeol synthase from Saccharolobus islandicus (strain Y.N.15.51 / Yellowstone #2) (Sulfolobus islandicus).